The primary structure comprises 296 residues: MDNSVRVRVPATSANLGPGYDCIGLALDLWDEVSVGVLDRPGVMIDVTGEGADTVPHDESHLVMATLRQGLVELGYPHPDAGLHLTAINSIPQSRGLGSSAAAVVSGLALAWGLARPGFPLDRSALLTMAAAIEGHPDNAAPAILGGAQLAWLDGEAVNHIGLTVNPSIVFRVYVPDRLVPTALARQVLPEQVDRVDAVHQVLAASLLVTALTTSPEHLLAATQDWIHQPYRRALMPESAALTDRLRGRGVATVISGAGPTVLALGSRDQLEKVSDVDTAGFVAHDLVLGEGVHFF.

Residue 92 to 102 (PQSRGLGSSAA) participates in ATP binding.

This sequence belongs to the GHMP kinase family. Homoserine kinase subfamily.

Its subcellular location is the cytoplasm. The catalysed reaction is L-homoserine + ATP = O-phospho-L-homoserine + ADP + H(+). It participates in amino-acid biosynthesis; L-threonine biosynthesis; L-threonine from L-aspartate: step 4/5. Functionally, catalyzes the ATP-dependent phosphorylation of L-homoserine to L-homoserine phosphate. The polypeptide is Homoserine kinase (Cutibacterium acnes (strain DSM 16379 / KPA171202) (Propionibacterium acnes)).